We begin with the raw amino-acid sequence, 120 residues long: Protein RALF-like 1 (120 aa).

Residues 1–26 form the signal peptide; that stretch reads MDKSFTLFLTLTILVVFIISSPPVQA. Positions 27–71 are cleaved as a propeptide — removed in mature form; the sequence is GFANDLGGVAWATTGDNGSGCHGSIAECIGAEEEEMDSEINRRIL. N-linked (GlcNAc...) asparagine glycosylation is present at Asn43. 2 cysteine pairs are disulfide-bonded: Cys89–Cys99 and Cys112–Cys118.

Belongs to the plant rapid alkalinization factor (RALF) family. As to quaternary structure, interacts with FER and promotes its phosphorylation and subsequent activation. Post-translationally, proteolytically cleaved, probably by S1P, a subtilisin-like serine protease (subtilase). In terms of tissue distribution, expressed in roots and stems.

It is found in the secreted. Functionally, cell signaling peptide that may regulate plant stress, growth, and development. Mediates a rapid alkalinization of extracellular space by mediating a transient increase in the cytoplasmic Ca(2+) concentration leading to a calcium-dependent signaling events through a cell surface receptor and a concomitant activation of some intracellular mitogen-activated protein kinases. Mostly active in roots. Prevents plant growth (e.g. root and leaf length). Suppresses cell elongation of the primary root by activating the cell surface receptor FER and triggering phosphorylation of AHA2 and subsequent extracellular alkalinization. This chain is Protein RALF-like 1 (RALF1), found in Arabidopsis thaliana (Mouse-ear cress).